The chain runs to 104 residues: Small ribosomal subunit protein uS10 (104 aa).

This sequence belongs to the universal ribosomal protein uS10 family. In terms of assembly, part of the 30S ribosomal subunit.

In terms of biological role, involved in the binding of tRNA to the ribosomes. This Thermosynechococcus vestitus (strain NIES-2133 / IAM M-273 / BP-1) protein is Small ribosomal subunit protein uS10.